Reading from the N-terminus, the 463-residue chain is Metacaspase-1 (463 aa).

Residues 1–149 (MSWNQYPGGG…PQLQGQGGQS (149 aa)) form a disordered region. The segment covering 7-18 (PGGGHHQQGGYG) has biased composition (gly residues). Over residues 20–56 (RPPPPQWAQQGPPPPPNMGYRPPPPPQAYYNNPPPPQ) the composition is skewed to pro residues. Over residues 57–83 (QYQRPAPQQNGYQQGGYQQQQQSQGNY) the composition is skewed to low complexity. Catalysis depends on residues H247 and C309.

The protein belongs to the peptidase C14B family.

Involved in cell death (apoptosis). The sequence is that of Metacaspase-1 (MCA1) from Cryptococcus neoformans var. neoformans serotype D (strain B-3501A) (Filobasidiella neoformans).